Consider the following 416-residue polypeptide: STAM-binding protein-like (416 aa).

The segment at 214-244 is disordered; that stretch reads SYGTVQPHPPAVDRSLKPSSYGSNSSGVTSD. Positions 230–243 are enriched in low complexity; the sequence is KPSSYGSNSSGVTS. The region spanning 249–380 is the MPN domain; sequence VKIPRDVCCK…LTDYGMKEIG (132 aa). Residues His-327, His-329, Asp-340, His-342, Cys-382, His-388, and His-390 each coordinate Zn(2+). Positions 327–340 match the JAMM motif motif; that stretch reads HTHPTQTAFLSSVD.

It belongs to the peptidase M67C family. The cofactor is Zn(2+).

In terms of biological role, zinc metalloprotease that specifically cleaves 'Lys-63'-linked polyubiquitin chains. Does not cleave 'Lys-48'-linked polyubiquitin chains. Functions at the endosome and is able to oppose the ubiquitin-dependent sorting of receptors to lysosomes. The sequence is that of STAM-binding protein-like (stambp) from Xenopus laevis (African clawed frog).